Reading from the N-terminus, the 426-residue chain is Pyruvate, phosphate dikinase regulatory protein, chloroplastic (426 aa).

Residues 1-41 (MIGCAKPLAAPLQAWARPPSPAGRRLPPSFCAPDTSPALTR) constitute a chloroplast transit peptide. Disordered regions lie at residues 1-76 (MIGC…HLDR) and 94-124 (AALSSASVSAPPVIKSPRPEDAAVAAEDGED). The segment covering 94–119 (AALSSASVSAPPVIKSPRPEDAAVAA) has biased composition (low complexity). 153 to 160 (HSVNAALG) lines the ADP pocket.

This sequence belongs to the pyruvate, phosphate/water dikinase regulatory protein family. PDRP subfamily. In terms of assembly, homodimer at pH 7.5 and homotetramer at pH 8.3. Mg(2+) serves as cofactor. As to expression, leaf mesophyll-cells.

It localises to the plastid. It is found in the chloroplast stroma. It catalyses the reaction N(tele)-phospho-L-histidyl/L-threonyl-[pyruvate, phosphate dikinase] + ADP = N(tele)-phospho-L-histidyl/O-phospho-L-threonyl-[pyruvate, phosphate dikinase] + AMP + H(+). The enzyme catalyses N(tele)-phospho-L-histidyl/O-phospho-L-threonyl-[pyruvate, phosphate dikinase] + phosphate + H(+) = N(tele)-phospho-L-histidyl/L-threonyl-[pyruvate, phosphate dikinase] + diphosphate. Its pathway is photosynthesis; C4 acid pathway. With respect to regulation, regulated by light/dark exposure. Its function is as follows. Bifunctional serine/threonine kinase and phosphorylase involved in the dark/light-mediated regulation of PPDK by catalyzing its phosphorylation/dephosphorylation. Dark/light-induced changes in stromal concentrations of the competing ADP and Pi substrates govern the direction of the reaction. In the dark, phosphorylates the catalytic intermediate of PPDK (PPDK-HisP), inactivating it. Light exposure induces the phosphorolysis reaction that reactivates PPDK. Phosphorylates PPDK at both Ser-528 and Thr-527. Can use ADP as a high specificity substrate and GDP as a lower affinity substrate, but has no activity with UDP. The polypeptide is Pyruvate, phosphate dikinase regulatory protein, chloroplastic (PDRP1) (Zea mays (Maize)).